Reading from the N-terminus, the 309-residue chain is CDK-activating kinase assembly factor MAT1 (309 aa).

The RING-type zinc finger occupies 6–50 (CPRCKTTKYRNPSLKLMVNVCGHTLCESCVELLFVRGSGSCQECD). Residues 142-161 (REQEELEEALEMEKHENEQR) form the UIM domain.

As to quaternary structure, associates with CDK7 and cyclin H.

The protein resides in the nucleus. Its function is as follows. Stabilizes the cyclin H-CDK7 complex to form a functional CDK-activating kinase (CAK) enzymatic complex. This Xenopus laevis (African clawed frog) protein is CDK-activating kinase assembly factor MAT1 (mnat1).